Here is a 988-residue protein sequence, read N- to C-terminus: Voltage-gated delayed rectifier potassium channel KCNH5 (988 aa).

Residues 1-217 (MPGGKRGLVA…LHYCAFKTTW (217 aa)) are Cytoplasmic-facing. One can recognise a PAS domain in the interval 14-86 (TFLENIVRRS…TIEKVRQTFD (73 aa)). One can recognise a PAC domain in the interval 91 to 143 (NCFEVLLYKKNRTPVWFYMQIAPIRNEHEKVVLFLCTFKDITLFKQPIEDDST). Residues 218–238 (DWVILILTFYTAIMVPYNVSF) traverse the membrane as a helical segment. The Extracellular portion of the chain corresponds to 239–243 (KTKQN). The chain crosses the membrane as a helical span at residues 244–264 (NIAWLVLDSVVDVIFLVDIVL). The Cytoplasmic portion of the chain corresponds to 265–291 (NFHTTFVGPGGEVISDPKLIRMNYLKT). A helical membrane pass occupies residues 292 to 312 (WFVIDLLSCLPYDIINAFENV). Over 313–319 (DEGISSL) the chain is Extracellular. Residues 320–340 (FSSLKVVRLLRLGRVARKLDH) traverse the membrane as a helical; Voltage-sensor segment. At 341–346 (YLEYGA) the chain is on the cytoplasmic side. A helical transmembrane segment spans residues 347-367 (AVLVLLVCVFGLVAHWLACIW). At 368-419 (YSIGDYEVIDEVTNTIQIDSWLYQLALSIGTPYRYNTSAGIWEGGPSKDSLY) the chain is on the extracellular side. N-linked (GlcNAc...) asparagine glycosylation is present at Asn403. Positions 420–440 (VSSLYFTMTSLTTIGFGNIAP) form an intramembrane region, pore-forming. Residues 432–437 (TIGFGN) carry the Selectivity filter motif. At 441 to 446 (TTDVEK) the chain is on the extracellular side. A helical transmembrane segment spans residues 447–467 (MFSVAMMMVGSLLYATIFGNV). Residues 468 to 988 (TTIFQQMYAN…PESDKDEINF (521 aa)) are Cytoplasmic-facing. A nucleoside 3',5'-cyclic phosphate is bound at residue 550–667 (AFRLASDGCL…NSFSRNLTLT (118 aa)). Residues 704–715 (HPVRKLFQKFKQ) are calmodulin-binding. The interval 718-742 (ELRNQGSAQSDPERSQLQVESRPLQ) is disordered. The span at 721–742 (NQGSAQSDPERSQLQVESRPLQ) shows a compositional bias: polar residues. A Glycyl lysine isopeptide (Lys-Gly) (interchain with G-Cter in ubiquitin) cross-link involves residue Lys785. 2 disordered regions span residues 839 to 897 (LLSE…AKHP) and 946 to 965 (SVPQ…PPQI). The span at 871–885 (SDLRLDKAGEARSPL) shows a compositional bias: basic and acidic residues. Position 883 is a phosphoserine (Ser883). Residues 909-948 (TLQEVKHELKEDIQLLSCRMTALEKQVAEILKLLSEKSVP) are CAD (involved in subunit assembly).

Belongs to the potassium channel family. H (Eag) (TC 1.A.1.20) subfamily. Kv10.2/KCNH5 sub-subfamily. As to quaternary structure, homotetramer. The potassium channel is probably composed of a homo- or heterotetrameric complex of pore-forming alpha subunits that can associate with modulating beta subunits. Heteromultimer with KCNH1/EAG. As to expression, detected in adult testis and in embryonic and adult brain, but not in other tissues. Highly expressed in specific brain areas, such as neocortex, olfactory bulb, primary olfactory cortex and brain stem. In cortex, expression is concentrated in a narrow band toward the middle lamella (layer IV). Moderately expressed in spinal cord, dorsal thalamic nuclei, medial hypothalamus, colliculus, lateral lemniscus, pontine nuclei and Islands of Calleja.

The protein localises to the membrane. The catalysed reaction is K(+)(in) = K(+)(out). With respect to regulation, inhibited by low nanomolar concentrations of cytosolic calcium. Its function is as follows. Pore-forming (alpha) subunit of a voltage-gated delayed rectifier potassium channel that mediates outward-rectifying potassium currents which, on depolarization, reaches a steady-state level and do not inactivate. The kinetic is characterized by a slow activation time course and a small voltage dependence of the activation time constants, therefore, starts to open at more negative voltages. The activation kinetics depend on the prepulse potential and external divalent cation concentration. The time course of activation is biphasic with a fast and a slowly activating current component. With negative prepulses, the current activation is delayed and slowed down several fold, whereas more positive prepulses speed up activation, therefore the activation rate depends on holding potential. This Rattus norvegicus (Rat) protein is Voltage-gated delayed rectifier potassium channel KCNH5.